The sequence spans 386 residues: MTVKVLVVDDSAFFRRRVTEILEDNTNIKVIGSANNGEEAVEQSRTLKPDVITMDIEMPVMNGIDAVKAIMSSNPCPILMFSSLTHEGATATLNALEAGAADFLPKKFEDIARNRDEAVKTLQDRVIAIARQPVSRTSARASTPPPVAKQPERSSEPTTALDRIRQRNNELQSQRESDARTATSAGALTINRAYQLLAIGTSTGGPVALQKILTQLPGNFPYPIVMVQHMPAAFTKAFSQRLDGLCQVHVKEAEDGDVLKAGTAYLAPGGKQMMVEGRPGSARLRIKDDTSGRITYKPSVDLTFASLSKTYMGKVLGVILTGMGADGRDGSRMLKDQGATIWAQDQASCVVYGMPQAVAQAGISTRSISLEGMAKAIMKEVGYSGL.

The region spanning Lys4–Thr121 is the Response regulatory domain. A 4-aspartylphosphate modification is found at Asp55. A disordered region spans residues Pro133–Leu161. Residues Ile190–Ser384 form the CheB-type methylesterase domain. Active-site residues include Ser202, His229, and Asp326.

Belongs to the CheB family. In terms of processing, phosphorylated by CheA. Phosphorylation of the N-terminal regulatory domain activates the methylesterase activity.

Its subcellular location is the cytoplasm. The enzyme catalyses [protein]-L-glutamate 5-O-methyl ester + H2O = L-glutamyl-[protein] + methanol + H(+). The catalysed reaction is L-glutaminyl-[protein] + H2O = L-glutamyl-[protein] + NH4(+). Its function is as follows. Involved in chemotaxis. Part of a chemotaxis signal transduction system that modulates chemotaxis in response to various stimuli. Catalyzes the demethylation of specific methylglutamate residues introduced into the chemoreceptors (methyl-accepting chemotaxis proteins or MCP) by CheR. Also mediates the irreversible deamidation of specific glutamine residues to glutamic acid. This Idiomarina loihiensis (strain ATCC BAA-735 / DSM 15497 / L2-TR) protein is Protein-glutamate methylesterase/protein-glutamine glutaminase.